A 187-amino-acid polypeptide reads, in one-letter code: MNHEELINSLTKKMNGALQVLDADLKGLRVGQASAYFLDPVQVEAYNSKVPILQVATISVSDTKTILVQVWDKSLVKAVKKAIMEANLGVSIISDDNQIIRLQLPIPSEERRKELVKIAHKYQEKSKIIVRNIRRDGIELIKQMEQNTECSKDEAHIYSKEIQELTDKYCDKIDKIIKLKEQDIINL.

The protein belongs to the RRF family.

It localises to the cytoplasm. Functionally, responsible for the release of ribosomes from messenger RNA at the termination of protein biosynthesis. May increase the efficiency of translation by recycling ribosomes from one round of translation to another. This is Ribosome-recycling factor from Orientia tsutsugamushi (strain Ikeda) (Rickettsia tsutsugamushi).